We begin with the raw amino-acid sequence, 218 residues long: MNATSTPSLPYDANRLRELAHLLIGTIGEFAQAGWTPATSSNFSHRLDEHHVAITVSGRDKRCLTEEDIMAVDLEGNAVGHPHTPSAETLLHTQLYRRFPEIGCVLHTHSLTQTVASRVYAGAGHISLKDYELLKAFEGHSTHETTLDVPVFCNTQNMNILAAQVDTLLDKQRMWGYLINGHGMYTWGNTLADARRHLEALEFLLHCELNLLKLRGYL.

Positions 107 and 109 each coordinate Zn(2+).

It belongs to the aldolase class II family. MtnB subfamily. Zn(2+) is required as a cofactor.

It catalyses the reaction 5-(methylsulfanyl)-D-ribulose 1-phosphate = 5-methylsulfanyl-2,3-dioxopentyl phosphate + H2O. It participates in amino-acid biosynthesis; L-methionine biosynthesis via salvage pathway; L-methionine from S-methyl-5-thio-alpha-D-ribose 1-phosphate: step 2/6. In terms of biological role, catalyzes the dehydration of methylthioribulose-1-phosphate (MTRu-1-P) into 2,3-diketo-5-methylthiopentyl-1-phosphate (DK-MTP-1-P). This Xylella fastidiosa (strain 9a5c) protein is Methylthioribulose-1-phosphate dehydratase.